A 440-amino-acid chain; its full sequence is Ribosomal protein uS12 methylthiotransferase RimO (440 aa).

Residues 2–118 enclose the MTTase N-terminal domain; that stretch reads KKAGIIHLGC…FVSLITSNGE (117 aa). 6 residues coordinate [4Fe-4S] cluster: C11, C47, C81, C154, C158, and C161. Residues 140–370 form the Radical SAM core domain; the sequence is ISPNFWVYVK…MSTQKEISKK (231 aa). The 68-residue stretch at 373-440 folds into the TRAM domain; sequence AKLLGREFDV…RAYDLLGELV (68 aa).

It belongs to the methylthiotransferase family. RimO subfamily. It depends on [4Fe-4S] cluster as a cofactor.

The protein localises to the cytoplasm. The enzyme catalyses L-aspartate(89)-[ribosomal protein uS12]-hydrogen + (sulfur carrier)-SH + AH2 + 2 S-adenosyl-L-methionine = 3-methylsulfanyl-L-aspartate(89)-[ribosomal protein uS12]-hydrogen + (sulfur carrier)-H + 5'-deoxyadenosine + L-methionine + A + S-adenosyl-L-homocysteine + 2 H(+). Functionally, catalyzes the methylthiolation of an aspartic acid residue of ribosomal protein uS12. This Dictyoglomus thermophilum (strain ATCC 35947 / DSM 3960 / H-6-12) protein is Ribosomal protein uS12 methylthiotransferase RimO.